Reading from the N-terminus, the 81-residue chain is Small ribosomal subunit protein bS16 (81 aa).

Belongs to the bacterial ribosomal protein bS16 family.

This chain is Small ribosomal subunit protein bS16, found in Lachnospira eligens (strain ATCC 27750 / DSM 3376 / VPI C15-48 / C15-B4) (Eubacterium eligens).